Reading from the N-terminus, the 3132-residue chain is Enniatin synthetase (3132 aa).

The tract at residues 53 to 466 (ADDKQRAVGH…VEKVDMMTQE (414 aa)) is condensation 1. A disordered region spans residues 186 to 212 (NDEHPRQFETPDSSQATPEEDLQPNPS). The segment at 495 to 887 (SQSPNKAAVA…GRMDSQVKIR (393 aa)) is adenylation 1. The tract at residues 994–1013 (SQKTHSTPSQQSQAAISSGT) is disordered. A Carrier 1 domain is found at 1010–1086 (SSGTDTETKL…GLKAIVIGTS (77 aa)). O-(pantetheine 4'-phosphoryl)serine is present on Ser1047. The condensation 2 stretch occupies residues 1105-1534 (SYAQNRMWFL…ETCISVLPLT (430 aa)). The interval 1563-1960 (FREQAAANPE…GRMDNQFKIR (398 aa)) is adenylation 2. The tract at residues 2021-2177 (EGWQDHFESG…YLAEVIDGLI (157 aa)) is S-adenosyl-L-methionine-dependent N-methyltransferase. Carrier domains follow at residues 2504–2578 (FPIS…RQGL) and 2598–2672 (APRT…ESSH). O-(pantetheine 4'-phosphoryl)serine is present on residues Ser2538 and Ser2632. The segment at 2719–3124 (QDVYPSTQMQ…RHVLEEVCKT (406 aa)) is condensation 3.

This sequence belongs to the NRP synthetase family. Pantetheine 4'-phosphate is required as a cofactor.

It functions in the pathway antibiotic biosynthesis; enniatin biosynthesis. In terms of biological role, nonribosomal peptide synthetase that synthesizes enniatin by coupling three D-hydroxycarboxylic acids and three L-amino acids via amide and ester bonds in an alternating fashion. Whereas ESYN1 can accept different amino acids as precursors (L-valine, L-isoleucine or L-leucine), only one species of D-hydroxycarboxylic acid can be found in natural enniatin isolates (D-hydroxyisovaleric acid, D-Hiv). D-Hiv stems from L-valine deanimation by a valine aminotransferase to 2-keto-isovaleric acid (2-Kiv), which becomes subsequently reduced by a keto-isovaleric acid reductase (KivR) to D-Hiv. The chain is Enniatin synthetase from Fusarium oxysporum (Fusarium vascular wilt).